The sequence spans 100 residues: uncharacterized protein (100 aa).

The interval 40–100 is disordered; it reads GDQMARKATS…DPTKNKSGRG (61 aa).

This is an uncharacterized protein from Mycobacterium tuberculosis (strain ATCC 25618 / H37Rv).